A 604-amino-acid chain; its full sequence is Glucose-methanol-choline family oxidoreductase mfmG (604 aa).

A signal peptide spans 1–24 (MYMLRPSSLLLATGLLNQGSSVLA). Asn-32 carries an N-linked (GlcNAc...) asparagine glycan. FAD contacts are provided by residues 44-45 (TA) and 65-66 (EA). Asn-76 and Asn-97 each carry an N-linked (GlcNAc...) asparagine glycan. FAD is bound at residue 126 to 129 (NFMA). N-linked (GlcNAc...) asparagine glycans are attached at residues Asn-260, Asn-265, Asn-401, and Asn-460. The active-site Proton acceptor is the His-538. Residues Ala-572 and 584–585 (PQ) each bind FAD.

The protein belongs to the GMC oxidoreductase family. As to quaternary structure, homodimer. The cofactor is FAD.

Oxidoreductase; part of the gene cluster that mediates the biosynthesis of the phthalide-terpenoid hybrid 11'-O-desmethylfendlerol. MfmG seems not to be involved directly in the biosynthesis of 11'-O-desmethylfendlerol and its role has still to be determined. The biosynthesis of 11'-O-desmethylfendlerol begins with the NR-PKS mfmB that forms 3,5-dimethylorsellinic acid (DMOA), which is then transformed into the phthalide 5,7-dihydroxy-4-(hydroxymethyl)-6-methylphthalide by the cytochrome P450 monooxygenase mfmA and the hydrolase mfmC. Subsequently, the methyltransferase mfmE catalyzes 7-O-methylation to yield 5-hydroxy-4-(hydroxymethyl)-7-methoxy-6-methylphthalide, which undergoes C-3 hydroxylation by the cytochrome P450 monooxygenase mfmF. The resultant cyclopolic acid (2,5-dihydroxy-4-(hydroxymethyl)-7-methoxy-6-methylphthalide) is then farnesylated by the DMATS-type prenyltransferase mfmD to afford 5-O-farnesylcyclopolic acid. Finally, the Pyr4-family terpene cyclase mfmH cyclizes the farnesyl moiety of 5-O-farnesylcyclopolic acid into a drimane-like structure, thus completing the biosynthesis of 11'-O-desmethylfendlerol. The sequence is that of Glucose-methanol-choline family oxidoreductase mfmG from Annulohypoxylon moriforme (Filamentous fungus).